We begin with the raw amino-acid sequence, 267 residues long: HTH-type transcriptional activator CsvR (267 aa).

DNA-binding regions (H-T-H motif) lie at residues 183 to 204 and 230 to 253; these read AIIA…ESED and ISQI…NKHF.

As to quaternary structure, homodimer.

In terms of biological role, transcriptional activator of fimbrial genes in enterotoxigenic E.coli. This Escherichia coli protein is HTH-type transcriptional activator CsvR.